Consider the following 90-residue polypeptide: Co-chaperonin GroES (90 aa).

Belongs to the GroES chaperonin family. As to quaternary structure, heptamer of 7 subunits arranged in a ring. Interacts with the chaperonin GroEL.

Its subcellular location is the cytoplasm. Functionally, together with the chaperonin GroEL, plays an essential role in assisting protein folding. The GroEL-GroES system forms a nano-cage that allows encapsulation of the non-native substrate proteins and provides a physical environment optimized to promote and accelerate protein folding. GroES binds to the apical surface of the GroEL ring, thereby capping the opening of the GroEL channel. This Bacteroides fragilis (strain ATCC 25285 / DSM 2151 / CCUG 4856 / JCM 11019 / LMG 10263 / NCTC 9343 / Onslow / VPI 2553 / EN-2) protein is Co-chaperonin GroES.